Reading from the N-terminus, the 520-residue chain is GMP synthase [glutamine-hydrolyzing] (520 aa).

A Glutamine amidotransferase type-1 domain is found at 9-202 (SVLIVDFGSQ…IHNIAGIKGD (194 aa)). Catalysis depends on Cys-86, which acts as the Nucleophile. Residues His-176 and Glu-178 contribute to the active site. The region spanning 203 to 395 (WSMSAYRQKA…LGLPDSFIGR (193 aa)) is the GMPS ATP-PPase domain. 230-236 (SGGVDSS) contributes to the ATP binding site.

Homodimer.

It catalyses the reaction XMP + L-glutamine + ATP + H2O = GMP + L-glutamate + AMP + diphosphate + 2 H(+). It participates in purine metabolism; GMP biosynthesis; GMP from XMP (L-Gln route): step 1/1. Its function is as follows. Catalyzes the synthesis of GMP from XMP. This is GMP synthase [glutamine-hydrolyzing] from Rhizobium etli (strain CIAT 652).